Here is a 542-residue protein sequence, read N- to C-terminus: MSMFCYQCQETAGGKGCTVRGVCGKNEEVAKLQDLLLYTVKGISYIVTKGNIDAAKLGNTNHEVLSSLFMTITNVNFDDGSIEKQIRKMLAVRDEMKKSVQAEGLHDAAVFSVDSRESMLKKADSVGVLSTQNEDIRSLREMITYGVKGMAAYAEHAKNIGKEDKEIYSFIYEALAATLDDSLSVDDLFALTLKTGEYGVKVMALLDEANTSRFGNPEITEVNIGVRKNPAILVSGHDLTDLEQLLEQTKGTGVDVYTHGEMLPAHYYPAFKKYDNFVGNYGNAWWKQVEEFESFHGPILFTTNCIVPPRSEEVRRRIFTTGSAGFPGCKHIEADENGKKDFSEIIELAKTLPAPDEIETGSIVGGFAHNQVMALADKVVEAVKSGAVKKFFVMAGCDGRMKSRSYYTEFAQNLPKDTVILTAGCAKYRYNKLGLGDIGGIPRVLDAGQCNDSYSLAVIALKLKEVFGLDDINKLPIAFNIAWYEQKAVIVLLALLYLGVKNIHLGPTLPGFLSPNVAKVLVEKFGIAGIGTVEDDIKLFMS.

Residues C5, C8, C17, and C23 each contribute to the [4Fe-4S] cluster site. Hybrid [4Fe-2O-2S] cluster contacts are provided by H237, E261, C305, C397, C425, C450, E485, and K487. Cysteine persulfide is present on C397.

This sequence belongs to the HCP family. It depends on [4Fe-4S] cluster as a cofactor. Hybrid [4Fe-2O-2S] cluster is required as a cofactor.

It is found in the cytoplasm. It catalyses the reaction A + NH4(+) + H2O = hydroxylamine + AH2 + H(+). Functionally, catalyzes the reduction of hydroxylamine to form NH(3) and H(2)O. The protein is Hydroxylamine reductase of Acetivibrio thermocellus (strain ATCC 27405 / DSM 1237 / JCM 9322 / NBRC 103400 / NCIMB 10682 / NRRL B-4536 / VPI 7372) (Clostridium thermocellum).